The sequence spans 290 residues: Putative heme oxygenase 3 (290 aa).

Residues 1–12 show a composition bias toward acidic residues; that stretch reads MSSEVETAEAVD. A disordered region spans residues 1 to 33; sequence MSSEVETAEAVDESEKNSMASEKENHSKIADFS. Residues 13-33 are compositionally biased toward basic and acidic residues; sequence ESEKNSMASEKENHSKIADFS. HRM repeat units lie at residues 238-243 and 255-260; these read KCPFNA and NCPFQM.

Belongs to the heme oxygenase family. In terms of tissue distribution, found in the spleen, liver, thymus, prostate, heart, kidney, brain and testis.

The catalysed reaction is heme b + 3 reduced [NADPH--hemoprotein reductase] + 3 O2 = biliverdin IXalpha + CO + Fe(2+) + 3 oxidized [NADPH--hemoprotein reductase] + 3 H2O + H(+). Functionally, heme oxygenase cleaves the heme ring at the alpha methene bridge to form biliverdin. Biliverdin is subsequently converted to bilirubin by biliverdin reductase. Heme oxygenase 3 could be implicated in some heme-dependent regulatory role in the cell. This is Putative heme oxygenase 3 (Hmox3) from Rattus norvegicus (Rat).